A 406-amino-acid polypeptide reads, in one-letter code: GTPase Obg (406 aa).

Residues 1 to 159 (MRFVDEAVIT…REIRLELKVL (159 aa)) form the Obg domain. A disordered region spans residues 120–143 (GGEGGLGNTHFKSSTNRAPRKCTT). In terms of domain architecture, OBG-type G spans 160-333 (ADVGLLGMPN…VVYYLMDQIE (174 aa)). GTP contacts are provided by residues 166 to 173 (GMPNAGKS), 191 to 195 (FTTMV), 213 to 216 (DIPG), 283 to 286 (NKLD), and 314 to 316 (SGL). Positions 173 and 193 each coordinate Mg(2+). Residues 381–406 (ESMMDDDDDFDDDEDDGDVESIYVRD) are disordered. Residues 383-399 (MMDDDDDFDDDEDDGDV) show a composition bias toward acidic residues.

The protein belongs to the TRAFAC class OBG-HflX-like GTPase superfamily. OBG GTPase family. Monomer. Mg(2+) serves as cofactor.

It localises to the cytoplasm. Its function is as follows. An essential GTPase which binds GTP, GDP and possibly (p)ppGpp with moderate affinity, with high nucleotide exchange rates and a fairly low GTP hydrolysis rate. Plays a role in control of the cell cycle, stress response, ribosome biogenesis and in those bacteria that undergo differentiation, in morphogenesis control. The protein is GTPase Obg of Acinetobacter baumannii (strain SDF).